Consider the following 292-residue polypeptide: Seed lectin (292 aa).

An N-terminal signal peptide occupies residues 1-37 (MATSNSRPHLLQTHKPFSVVLAISITFFLLLLNKVNS). Residues Asn82 and Asn154 are each glycosylated (N-linked (GlcNAc...) asparagine). Residues Asp163 and Asp165 each contribute to the Mn(2+) site. Positions 165, 167, 169, and 172 each coordinate Ca(2+). Mn(2+) contacts are provided by Asp172 and His177. N-linked (GlcNAc...) asparagine glycosylation is present at Asn186.

The protein belongs to the leguminous lectin family.

Functionally, mannose/glucose-specific lectin. The protein is Seed lectin of Styphnolobium japonicum (Japanese pagoda tree).